Reading from the N-terminus, the 355-residue chain is Protein FIP1 (355 aa).

A run of 4 helical transmembrane segments spans residues tyrosine 42–phenylalanine 62, leucine 72–valine 92, valine 113–valine 133, and isoleucine 149–valine 169. A coiled-coil region spans residues leucine 220–glutamate 337. Over residues asparagine 331–serine 340 the composition is skewed to basic and acidic residues. Positions asparagine 331 to proline 355 are disordered.

The protein belongs to the TMEM192 family. As to quaternary structure, interacts with FRI.

The protein resides in the membrane. In Arabidopsis thaliana (Mouse-ear cress), this protein is Protein FIP1.